A 226-amino-acid chain; its full sequence is E3 ubiquitin-protein ligase RNF186 (226 aa).

The RING-type zinc finger occupies 39–85 (CLVCREPYSGVRPPKLLGCQHAFCAVCLKLLLCVQDDAWSIPCPLCR). Positions 121 to 143 (GLANPATLTAGQPREAGEEEQDA) are disordered. The next 2 helical transmembrane spans lie at 157 to 177 (HLLL…PGVI) and 179 to 199 (WVLS…CSHP).

As to quaternary structure, interacts with BNIP1. In terms of processing, polyubiquitinated. 'Lys-29' autoubiquitination leads to proteasomal degradation.

The protein resides in the endoplasmic reticulum membrane. The enzyme catalyses S-ubiquitinyl-[E2 ubiquitin-conjugating enzyme]-L-cysteine + [acceptor protein]-L-lysine = [E2 ubiquitin-conjugating enzyme]-L-cysteine + N(6)-ubiquitinyl-[acceptor protein]-L-lysine.. It functions in the pathway protein modification; protein ubiquitination. In terms of biological role, E3 ubiquitin protein ligase that is part of an apoptotic signaling pathway activated by endoplasmic reticulum stress. Stimulates the expression of proteins specific of the unfolded protein response (UPR), ubiquitinates BNIP1 and regulates its localization to the mitochondrion and induces calcium release from the endoplasmic reticulum that ultimately leads to cell apoptosis. Plays a role in the maintenance of intestinal homeostasis and clearance of enteric pathogens. Upon NOD2 stimulation, ubiquitinates the ER stress sensor activating transcription factor 6/ATF6 and promotes the unfolded protein response UPR. Participates in basal level of autophagy maintenance by regulating the ubiquitination of EPHB2. Upon stimulation by ligand EFNB1, ubiquitinates EPHB2 and further recruits MAP1LC3B for autophagy induction. Controls nutrient sensing by ubiquitinating Sestrin-2/SESN2, which is an intracellular sensor of cytosolic leucine and inhibitor of mTORC1 activity. This chain is E3 ubiquitin-protein ligase RNF186, found in Bos taurus (Bovine).